We begin with the raw amino-acid sequence, 237 residues long: Probable GTP-binding protein EngB (237 aa).

The EngB-type G domain occupies 13-188 (TGYEIAFAGR…ASVMAGRLNY (176 aa)). GTP contacts are provided by residues 21 to 28 (GRSNAGKS), 48 to 52 (GRTQM), 67 to 70 (DLPG), 134 to 137 (TKAD), and 167 to 169 (FSS). The Mg(2+) site is built by Ser-28 and Thr-50. The span at 207–220 (DDLNDELMDQDETS) shows a compositional bias: acidic residues. A disordered region spans residues 207–237 (DDLNDELMDQDETSEFNTENIDDHLDQEPKI). Residues 227–237 (IDDHLDQEPKI) show a composition bias toward basic and acidic residues.

Belongs to the TRAFAC class TrmE-Era-EngA-EngB-Septin-like GTPase superfamily. EngB GTPase family. Requires Mg(2+) as cofactor.

Functionally, necessary for normal cell division and for the maintenance of normal septation. In Acinetobacter baylyi (strain ATCC 33305 / BD413 / ADP1), this protein is Probable GTP-binding protein EngB.